The primary structure comprises 1135 residues: Putative beta-hexosaminidase (1135 aa).

A signal peptide spans methionine 1 to serine 23. 2 disordered regions span residues alanine 970 to glutamine 1082 and glutamine 1107 to glycine 1135. The segment covering asparagine 986–proline 1003 has biased composition (pro residues). Composition is skewed to low complexity over residues proline 1004–glycine 1026 and threonine 1043–glutamine 1073.

The protein belongs to the glycosyl hydrolase 20 family. As to expression, prismatic layer of shell (at protein level). Expressed primarily in the mantle with highest level in the mantle edge and lower level in the mantle pallium.

The protein localises to the secreted. It carries out the reaction Hydrolysis of terminal non-reducing N-acetyl-D-hexosamine residues in N-acetyl-beta-D-hexosaminides.. It functions in the pathway glycan degradation; chitin degradation. The polypeptide is Putative beta-hexosaminidase (Margaritifera margaritifera (Freshwater pearl mussel)).